A 376-amino-acid polypeptide reads, in one-letter code: Cyclin-D3-1 (376 aa).

The tract at residues 298 to 376 (KRKSHDSSSS…HLPWAIVATP (79 aa)) is disordered. Positions 321–349 (NSDESSNDSWSASSCNPPTSSSSPQQQPP) are enriched in low complexity. The span at 354-363 (RGAEENEKKK) shows a compositional bias: basic and acidic residues.

Belongs to the cyclin family. Cyclin D subfamily. Interacts with the C-terminal domain of CDKA-1. Interacts with KRP1/ICK1. Interacts with KRP6. Post-translationally, phosphorylated. In terms of tissue distribution, highly expressed in roots and at lower levels in leaves and flowers. Expressed in vegetative shoot meristem and inflorescence.

In terms of biological role, involved in the control of the cell cycle at the G1/S (start) transition. Activates the G1/S phase transition in response to cytokinin hormone signal, but declines in response to sucrose starvation leading to G1 arrest. Involved in the induction of mitotic cell division. Plays an important role in the switch from cell proliferation to the final stages of differentiation during plant development. May not be involved in the activation of cell cycle in the root apical meristem (RAM) in the early phase of seed germination. Promotes divisions in the guard cells (GCs) after the guard mother cells (GMC) symmetric division. The protein is Cyclin-D3-1 (CYCD3-1) of Arabidopsis thaliana (Mouse-ear cress).